A 211-amino-acid chain; its full sequence is Prolactin-1 (211 aa).

Residues 1–23 (MARRSQGTKLHLAVLCLVVSCHA) form the signal peptide. 2 disulfide bridges follow: C69-C184 and C201-C211.

Belongs to the somatotropin/prolactin family.

The protein resides in the secreted. The polypeptide is Prolactin-1 (prl1) (Oncorhynchus keta (Chum salmon)).